The sequence spans 102 residues: Small ribosomal subunit protein uS10 (102 aa).

Belongs to the universal ribosomal protein uS10 family. As to quaternary structure, part of the 30S ribosomal subunit.

In terms of biological role, involved in the binding of tRNA to the ribosomes. The sequence is that of Small ribosomal subunit protein uS10 from Rhodospirillum rubrum (strain ATCC 11170 / ATH 1.1.1 / DSM 467 / LMG 4362 / NCIMB 8255 / S1).